A 911-amino-acid chain; its full sequence is Epithelial discoidin domain-containing receptor 1 (911 aa).

The N-terminal stretch at 1–19 (MGTGTLSSLLLLLLLVTIG) is a signal peptide. Topologically, residues 22-415 (DMKGHFDPAK…VAKAEGSPTA (394 aa)) are extracellular. The F5/8 type C domain occupies 32–186 (CRYALGMQDR…VCLRVELYGC (155 aa)). Disulfide bonds link Cys-32–Cys-186 and Cys-75–Cys-178. Residues 193–369 (LSYTAPVGQT…LFSEISFISD (177 aa)) form a DS-like domain region. The Ca(2+) site is built by Asn-213, Gln-232, Asp-235, Val-237, Tyr-255, and Tyr-257. Asn-213 is a glycosylation site (N-linked (GlcNAc...) asparagine). Asn-262 is a glycosylation site (N-linked (GlcNAc...) asparagine). A disulfide bridge links Cys-305 with Cys-350. Ser-362 and Glu-363 together coordinate Ca(2+). N-linked (GlcNAc...) asparagine glycans are attached at residues Asn-372 and Asn-392. A helical transmembrane segment spans residues 416 to 436 (ILIGCLVAIILLLLLIIALML). The Cytoplasmic segment spans residues 437-911 (WRLHWRRLLS…FLADDALNTV (475 aa)). The tract at residues 468–496 (ILINNRPGPREPPPYQEPRPRGTPPHSAP) is disordered. A compositionally biased stretch (pro residues) spans 477 to 494 (REPPPYQEPRPRGTPPHS). The short motif at 479–482 (PPPY) is the PPxY motif element. Tyr-482, Tyr-511, and Tyr-518 each carry phosphotyrosine; by autocatalysis. In terms of domain architecture, Protein kinase spans 608–903 (LRFKEKLGEG…PPFAQLHRFL (296 aa)). Residues 614-622 (LGEGQFGEV) and Lys-653 each bind ATP. At Tyr-738 the chain carries Phosphotyrosine; by autocatalysis. Catalysis depends on Asp-764, which acts as the Proton acceptor. Phosphotyrosine; by autocatalysis occurs at positions 790, 794, and 795.

Belongs to the protein kinase superfamily. Tyr protein kinase family. Insulin receptor subfamily. As to quaternary structure, homodimer. Interacts (via PPxY motif) with WWC1 (via WW domains) in a collagen-regulated manner. Forms a tripartite complex with WWC1 and PRKCZ, but predominantly in the absence of collagen. Interacts (tyrosine phosphorylated) with SHC1. Interacts with SRC. Interacts with MYH9. Interacts with CDH1. Interacts with PTPN11. Interacts with NCK2. Autophosphorylated in response to fibrillar collagen binding. As to expression, detected in the cochlea and the organ of Corti in the inner ear. Isoform 1 is predominant and is expressed in developing embryo and adult brain. Isoform 2 is expressed in various epithelial cells.

The protein resides in the cell membrane. The catalysed reaction is L-tyrosyl-[protein] + ATP = O-phospho-L-tyrosyl-[protein] + ADP + H(+). In terms of biological role, tyrosine kinase that functions as a cell surface receptor for fibrillar collagen and regulates cell attachment to the extracellular matrix, remodeling of the extracellular matrix, cell migration, differentiation, survival and cell proliferation. Collagen binding triggers a signaling pathway that involves SRC and leads to the activation of MAP kinases. Regulates remodeling of the extracellular matrix by up-regulation of the matrix metalloproteinases MMP2, MMP7 and MMP9, and thereby facilitates cell migration and wound healing, but also tumor cell invasion. Promotes smooth muscle cell migration, and thereby contributes to arterial wound healing. Phosphorylates PTPN11. Required for normal blastocyst implantation during pregnancy, for normal mammary gland differentiation and normal lactation. Required for normal ear morphology and normal hearing. This Mus musculus (Mouse) protein is Epithelial discoidin domain-containing receptor 1 (Ddr1).